Reading from the N-terminus, the 373-residue chain is Lipoyl amidotransferase LIPT1, mitochondrial (373 aa).

Residues 1–25 constitute a mitochondrion transit peptide; that stretch reads MLIPLSMKNCFRLLCQHKVPAAGFK. Positions 57-243 constitute a BPL/LPL catalytic domain; that stretch reads LEGKPILFLW…EYAAHHQVDG (187 aa). 4 residues coordinate (R)-lipoyl-5'-AMP: Tyr107, Lys151, Lys161, and Thr179.

Belongs to the LplA family.

It is found in the mitochondrion. It catalyses the reaction (R)-lipoyl-5'-AMP + L-lysyl-[lipoyl-carrier protein] = N(6)-[(R)-lipoyl]-L-lysyl-[lipoyl-carrier protein] + AMP + 2 H(+). The enzyme catalyses N(6)-[(R)-lipoyl]-L-lysyl-[glycine-cleavage complex H protein] + L-lysyl-[lipoyl-carrier protein] = L-lysyl-[glycine-cleavage complex H protein] + N(6)-[(R)-lipoyl]-L-lysyl-[lipoyl-carrier protein]. Its pathway is protein modification; protein lipoylation via exogenous pathway; protein N(6)-(lipoyl)lysine from lipoate: step 2/2. Functionally, lipoyl amidotransferase that catalyzes the transfer of lipoyl moieties from lipoyl-protein H of the glycine cleavage system (lipoyl-GCSH) to E2 subunits of the pyruvate dehydrogenase complex (PDCE2). Unable to catalyze the transfer of octanoyl from octanoyl-GCSH to PDCE2. In vitro, it is also able to catalyze the transfer of the lipoyl group from lipoyl-AMP to the specific lysine residue of lipoyl domains of lipoate-dependent enzymes but this reaction may not be physiologically relevant. This chain is Lipoyl amidotransferase LIPT1, mitochondrial, found in Mus musculus (Mouse).